The primary structure comprises 317 residues: Transaldolase (317 aa).

Lysine 132 (schiff-base intermediate with substrate) is an active-site residue.

The protein belongs to the transaldolase family. Type 1 subfamily. Homodimer.

Its subcellular location is the cytoplasm. It carries out the reaction D-sedoheptulose 7-phosphate + D-glyceraldehyde 3-phosphate = D-erythrose 4-phosphate + beta-D-fructose 6-phosphate. It functions in the pathway carbohydrate degradation; pentose phosphate pathway; D-glyceraldehyde 3-phosphate and beta-D-fructose 6-phosphate from D-ribose 5-phosphate and D-xylulose 5-phosphate (non-oxidative stage): step 2/3. In terms of biological role, transaldolase is important for the balance of metabolites in the pentose-phosphate pathway. The protein is Transaldolase of Photorhabdus laumondii subsp. laumondii (strain DSM 15139 / CIP 105565 / TT01) (Photorhabdus luminescens subsp. laumondii).